The primary structure comprises 525 residues: Lysine--tRNA ligase (525 aa).

2 residues coordinate Mg(2+): glutamate 430 and glutamate 437.

This sequence belongs to the class-II aminoacyl-tRNA synthetase family. In terms of assembly, homodimer. Mg(2+) serves as cofactor.

It localises to the cytoplasm. The enzyme catalyses tRNA(Lys) + L-lysine + ATP = L-lysyl-tRNA(Lys) + AMP + diphosphate. This chain is Lysine--tRNA ligase, found in Chlamydia caviae (strain ATCC VR-813 / DSM 19441 / 03DC25 / GPIC) (Chlamydophila caviae).